A 1112-amino-acid polypeptide reads, in one-letter code: DNA polymerase II large subunit (1112 aa).

It belongs to the archaeal DNA polymerase II family. As to quaternary structure, heterodimer of a large subunit and a small subunit.

The enzyme catalyses DNA(n) + a 2'-deoxyribonucleoside 5'-triphosphate = DNA(n+1) + diphosphate. It carries out the reaction Exonucleolytic cleavage in the 3'- to 5'-direction to yield nucleoside 5'-phosphates.. In terms of biological role, possesses two activities: a DNA synthesis (polymerase) and an exonucleolytic activity that degrades single-stranded DNA in the 3'- to 5'-direction. Has a template-primer preference which is characteristic of a replicative DNA polymerase. This Cenarchaeum symbiosum (strain A) protein is DNA polymerase II large subunit.